Here is a 642-residue protein sequence, read N- to C-terminus: MNSVIVEDDPTLIHRFLFHAENKPDALAYCFLEDGEIDRQRVSFRDLREMSTVVARIFSSVCQTQEPVLLALPNDCRFIVGFLATQLESLIAIPVYPPEGKHKRARFTSIVHSSGARVLLTSSEYIKRCSNYFSTLADDGVTVIDIDSLLNGLLLPLPQGVSDVNGTLVPGEVSTKATGLQGAESSVESYNVESYIEPSAKPDDISFVQYTSGSTGEPKGVVITHANLIENQRMIQRSFCHDESTVFGSWLPFYHDMGLVGNILQPLYLGIPCYFMAPIAFIQKPFRWLALISKYRVTTSGGPDFGYALCAKRVKDAQIASLDLTSWEVAFNGSEPVKLATITRFHAKFSSCGFSAKSMYPVYGMAEATLFISGGSRHNEPQALQIDSAELQRGRIIGAAENENSKSLVCCGDDIDRQQVCIVDPASRLPVADGSVGEIWVTGAHVAKSYFRNPELSRSTLAATFDSASDSNADQSQCKYLRTGDLGAVVSGDLYITGRLKDLIVMRGLNHHPHDIEATLQQLDASLGEYACACFTDNIGDVDFLTVVQEIAPTYAKSGSLEDLADKMCEELNQEHGLTLDSIYFVRPFTIPKTTSGKLQRSAMRSRLAENAVTPIWRYLSPRIAPLVTQNGTLEERVSYVR.

Belongs to the ATP-dependent AMP-binding enzyme family.

The catalysed reaction is a medium-chain fatty acid + holo-[ACP] + ATP = a medium-chain fatty acyl-[ACP] + AMP + diphosphate. It carries out the reaction a medium-chain fatty acid + ATP + H(+) = a medium-chain fatty acyl-AMP + diphosphate. It catalyses the reaction a medium-chain fatty acyl-AMP + holo-[ACP] = a medium-chain fatty acyl-[ACP] + AMP + H(+). The enzyme catalyses decanoate + holo-[ACP] + ATP = decanoyl-[ACP] + AMP + diphosphate. The catalysed reaction is decanoate + ATP + H(+) = decanoyl-AMP + diphosphate. It carries out the reaction decanoyl-AMP + holo-[ACP] = decanoyl-[ACP] + AMP + H(+). Functionally, ligase likely involved in the biosynthesis of a polyyne metabolite. Catalyzes the activation of decanoic acid, followed by the loading of the activated decanoic acid onto the acyl carrier protein TtuC. Decanoic acid is the preferred substrate, but it can also use 10-undecenoic acid and lauric acid. Nonanoic acid and 7-octenoic acid are only weakly activated. In Teredinibacter turnerae (strain ATCC 39867 / T7901), this protein is Medium-chain-fatty-acid--[acyl-carrier-protein] ligase TtuA.